Consider the following 301-residue polypeptide: uncharacterized protein (301 aa).

2 disordered regions span residues 167–186 (DVHL…PKER) and 225–244 (ASES…EGAS). Residues 170–181 (LNSTTPPHTAQV) are compositionally biased toward polar residues. Over residues 226–237 (SESSLETSSVSS) the composition is skewed to low complexity.

This is an uncharacterized protein from Mus musculus (Mouse).